A 514-amino-acid polypeptide reads, in one-letter code: Histidine ammonia-lyase (514 aa).

Positions 142 to 144 form a cross-link, 5-imidazolinone (Ala-Gly); that stretch reads ASG. Residue Ser143 is modified to 2,3-didehydroalanine (Ser).

The protein belongs to the PAL/histidase family. In terms of processing, contains an active site 4-methylidene-imidazol-5-one (MIO), which is formed autocatalytically by cyclization and dehydration of residues Ala-Ser-Gly.

It is found in the cytoplasm. The catalysed reaction is L-histidine = trans-urocanate + NH4(+). It participates in amino-acid degradation; L-histidine degradation into L-glutamate; N-formimidoyl-L-glutamate from L-histidine: step 1/3. The polypeptide is Histidine ammonia-lyase (Sorangium cellulosum (strain So ce56) (Polyangium cellulosum (strain So ce56))).